Consider the following 196-residue polypeptide: Acyl-homoserine-lactone synthase (196 aa).

The protein belongs to the autoinducer synthase family.

It carries out the reaction a fatty acyl-[ACP] + S-adenosyl-L-methionine = an N-acyl-L-homoserine lactone + S-methyl-5'-thioadenosine + holo-[ACP] + H(+). Its function is as follows. Required for the synthesis of a yet unknown N-aceyl-homoserine lactone (N-aceyl-HSL), an autoinducer molecule which binds to PhzR and thus regulates phenazine production. The polypeptide is Acyl-homoserine-lactone synthase (phzI) (Pseudomonas fluorescens).